The chain runs to 299 residues: Taste receptor type 2 member 16 (299 aa).

Residues M1–Q5 are Extracellular-facing. A helical membrane pass occupies residues V6–C26. Over T27–T47 the chain is Cytoplasmic. Residues I48–F68 form a helical membrane-spanning segment. Residues G69–S82 lie on the Extracellular side of the membrane. Residues V83–Y103 form a helical membrane-spanning segment. Topologically, residues C104–L125 are cytoplasmic. Residues V126–V146 traverse the membrane as a helical segment. The Extracellular segment spans residues K147–M183. The N-linked (GlcNAc...) asparagine glycan is linked to N163. A helical membrane pass occupies residues I184–L204. At V205–T233 the chain is on the cytoplasmic side. The helical transmembrane segment at F234 to F254 threads the bilayer. The Extracellular portion of the chain corresponds to D255 to S258. A helical transmembrane segment spans residues W259 to M279. Residues M280–S299 are Cytoplasmic-facing.

Belongs to the G-protein coupled receptor T2R family. Interacts with RTP3 and RTP4.

The protein resides in the cell membrane. Functionally, gustducin-coupled receptor implicated in the perception of bitter compounds in the oral cavity and the gastrointestinal tract. Signals through PLCB2 and the calcium-regulated cation channel TRPM5. This Mus musculus (Mouse) protein is Taste receptor type 2 member 16 (Tas2r16).